Consider the following 258-residue polypeptide: MSMTTETSTNKIQVRDLNFYYGKFHALKNITLDIAANQVTAFIGPSGCGKSTLLRTLNKMYQLYPEQRAEGDILLDGNNILTDKQDIALLRAKVGMVFQKPTPFPMSIYDNIAFGVRLFEKLSRADMDERVQWALTKAALWQETKDKLHQSGYSLSGGQQQRLCIARGIAIRPDVLLLDEPCSALDPISTGRIEELISELKKDYTVVIVTHNMQQAARCSDHTAFMYLGELIEFSDTDTLFTAPRQKQTEDYITGRYG.

One can recognise an ABC transporter domain in the interval 12-253 (IQVRDLNFYY…PRQKQTEDYI (242 aa)). 44 to 51 (GPSGCGKS) serves as a coordination point for ATP.

It belongs to the ABC transporter superfamily. Phosphate importer (TC 3.A.1.7) family. As to quaternary structure, the complex is composed of two ATP-binding proteins (PstB), two transmembrane proteins (PstC and PstA) and a solute-binding protein (PstS).

It localises to the cell inner membrane. It catalyses the reaction phosphate(out) + ATP + H2O = ADP + 2 phosphate(in) + H(+). Its function is as follows. Part of the ABC transporter complex PstSACB involved in phosphate import. Responsible for energy coupling to the transport system. This Pectobacterium atrosepticum (strain SCRI 1043 / ATCC BAA-672) (Erwinia carotovora subsp. atroseptica) protein is Phosphate import ATP-binding protein PstB 2.